Reading from the N-terminus, the 285-residue chain is Polyamine aminopropyltransferase (285 aa).

Residues 5-241 (QDWFTESYPD…GWWSATMAGK (237 aa)) enclose the PABS domain. Gln-35 lines the S-methyl-5'-thioadenosine pocket. Spermidine contacts are provided by His-66 and Asp-90. S-methyl-5'-thioadenosine-binding positions include Asp-110 and 141–142 (DG). The active-site Proton acceptor is Asp-160. 160 to 163 (DSTD) serves as a coordination point for spermidine. Pro-167 lines the S-methyl-5'-thioadenosine pocket.

Belongs to the spermidine/spermine synthase family. In terms of assembly, homodimer or homotetramer.

It is found in the cytoplasm. The catalysed reaction is S-adenosyl 3-(methylsulfanyl)propylamine + putrescine = S-methyl-5'-thioadenosine + spermidine + H(+). The protein operates within amine and polyamine biosynthesis; spermidine biosynthesis; spermidine from putrescine: step 1/1. In terms of biological role, catalyzes the irreversible transfer of a propylamine group from the amino donor S-adenosylmethioninamine (decarboxy-AdoMet) to putrescine (1,4-diaminobutane) to yield spermidine. In Methylococcus capsulatus (strain ATCC 33009 / NCIMB 11132 / Bath), this protein is Polyamine aminopropyltransferase.